We begin with the raw amino-acid sequence, 421 residues long: Large ribosomal subunit protein uL4 (421 aa).

Ala2 bears the N-acetylalanine mark. Lys14 bears the N6-acetyllysine mark. Position 97 is an omega-N-methylarginine (Arg97). Lys106 bears the N6-acetyllysine mark. Lys239 is covalently cross-linked (Glycyl lysine isopeptide (Lys-Gly) (interchain with G-Cter in SUMO2)). Lys259 is subject to N6-acetyllysine. Residue Thr266 is modified to Phosphothreonine. Phosphoserine is present on residues Ser290 and Ser295. Arg300 is modified (citrulline). Lys327 is covalently cross-linked (Glycyl lysine isopeptide (Lys-Gly) (interchain with G-Cter in SUMO2)). An N6-acetyllysine mark is found at Lys333 and Lys353. Lys364 carries the post-translational modification N6-acetyllysine; alternate. Residue Lys364 forms a Glycyl lysine isopeptide (Lys-Gly) (interchain with G-Cter in SUMO1); alternate linkage. Ser365 is modified (phosphoserine). The segment covering 365 to 379 (SEKIVPEKGAGDKKP) has biased composition (basic and acidic residues). A disordered region spans residues 365–421 (SEKIVPEKGAGDKKPAVGKKGKKPVDAKKLKKPAGKKVVTKKPAEKKPTTEEKKSAA). Residues 393–404 (KLKKPAGKKVVT) show a composition bias toward basic residues. Basic and acidic residues predominate over residues 406–421 (KPAEKKPTTEEKKSAA).

Belongs to the universal ribosomal protein uL4 family. In terms of assembly, component of the large ribosomal subunit. May bind IPO9 with low affinity. Interacts with RBM3. In terms of processing, citrullinated by PADI4.

The protein localises to the cytoplasm. In terms of biological role, component of the large ribosomal subunit. The ribosome is a large ribonucleoprotein complex responsible for the synthesis of proteins in the cell. The polypeptide is Large ribosomal subunit protein uL4 (Rpl4) (Rattus norvegicus (Rat)).